The chain runs to 117 residues: Large ribosomal subunit protein uL18 (117 aa).

The protein belongs to the universal ribosomal protein uL18 family. As to quaternary structure, part of the 50S ribosomal subunit; part of the 5S rRNA/L5/L18/L25 subcomplex. Contacts the 5S and 23S rRNAs.

In terms of biological role, this is one of the proteins that bind and probably mediate the attachment of the 5S RNA into the large ribosomal subunit, where it forms part of the central protuberance. In Laribacter hongkongensis (strain HLHK9), this protein is Large ribosomal subunit protein uL18.